Consider the following 252-residue polypeptide: 3-dehydroquinate dehydratase (252 aa).

Residues Ser-21, 46 to 48 (EWR), and Arg-82 contribute to the 3-dehydroquinate site. His-143 functions as the Proton donor/acceptor in the catalytic mechanism. Catalysis depends on Lys-170, which acts as the Schiff-base intermediate with substrate. Residues Arg-213, Ser-232, and Gln-236 each coordinate 3-dehydroquinate.

It belongs to the type-I 3-dehydroquinase family. Homodimer.

The enzyme catalyses 3-dehydroquinate = 3-dehydroshikimate + H2O. Its pathway is metabolic intermediate biosynthesis; chorismate biosynthesis; chorismate from D-erythrose 4-phosphate and phosphoenolpyruvate: step 3/7. Its function is as follows. Involved in the third step of the chorismate pathway, which leads to the biosynthesis of aromatic amino acids. Catalyzes the cis-dehydration of 3-dehydroquinate (DHQ) and introduces the first double bond of the aromatic ring to yield 3-dehydroshikimate. The protein is 3-dehydroquinate dehydratase of Escherichia coli O6:K15:H31 (strain 536 / UPEC).